The sequence spans 157 residues: Transcription elongation factor GreA (157 aa).

Residues 1–60 (MEKVPMTSAGFAALGEELKKRQSEDRPRIIEHIAEARSHGDLSENAEYHAAKEEQSHNEG) are disordered. Residues 16-60 (EELKKRQSEDRPRIIEHIAEARSHGDLSENAEYHAAKEEQSHNEG) are compositionally biased toward basic and acidic residues. Residues 46–73 (AEYHAAKEEQSHNEGRIAELEDKLARAD) are a coiled coil.

The protein belongs to the GreA/GreB family.

Functionally, necessary for efficient RNA polymerase transcription elongation past template-encoded arresting sites. The arresting sites in DNA have the property of trapping a certain fraction of elongating RNA polymerases that pass through, resulting in locked ternary complexes. Cleavage of the nascent transcript by cleavage factors such as GreA or GreB allows the resumption of elongation from the new 3'terminus. GreA releases sequences of 2 to 3 nucleotides. The chain is Transcription elongation factor GreA from Bradyrhizobium diazoefficiens (strain JCM 10833 / BCRC 13528 / IAM 13628 / NBRC 14792 / USDA 110).